Here is a 278-residue protein sequence, read N- to C-terminus: PILR alpha-associated neural protein (278 aa).

An N-terminal signal peptide occupies residues 1–27 (MWSAQLLSQLLPLWPLLLLSVLPPAQG). Positions 25–93 (AQGSSHRSPP…PSGFEEGPPS (69 aa)) are disordered. The Extracellular portion of the chain corresponds to 28 to 174 (SSHRSPPAPA…FGGRGEGVDP (147 aa)). Residue Thr136 is glycosylated (O-linked (GalNAc...) threonine). Residues 175-195 (QLYVTITISIIIVLVATGIIF) traverse the membrane as a helical segment. Residues 196–278 (KFCWDRSQKR…QLNRIPLVNL (83 aa)) lie on the Cytoplasmic side of the membrane. The segment at 206–278 (RRPSGQQGAL…QLNRIPLVNL (73 aa)) is disordered. Positions 209-225 (SGQQGALRQEESQQPLT) are enriched in polar residues.

Post-translationally, O-glycosylation at Thr-136 is essential for recognition by PILRA. In terms of tissue distribution, mainly expressed in brain and spinal cord. Weak expression also detected in heart, kidney, spleen and lymph node. Virtually no expression detected in liver and embryo relative to brain.

Its subcellular location is the membrane. Acts as a ligand for PILRA in neuronal tissues, where it may be involved in immune regulation. The chain is PILR alpha-associated neural protein (Pianp) from Mus musculus (Mouse).